The following is a 284-amino-acid chain: Nucleotide-binding protein Sbal195_0713 (284 aa).

Residue Gly-8–Ser-15 coordinates ATP. Position 56-59 (Asp-56–Asn-59) interacts with GTP.

This sequence belongs to the RapZ-like family.

In terms of biological role, displays ATPase and GTPase activities. The polypeptide is Nucleotide-binding protein Sbal195_0713 (Shewanella baltica (strain OS195)).